The chain runs to 652 residues: Drebrin (652 aa).

Ala-2 is modified (N-acetylalanine). Residues 5 to 134 (GFAAHRLELL…DPGAIGQRLS (130 aa)) enclose the ADF-H domain. 2 stretches are compositionally biased toward basic and acidic residues: residues 211–236 (MEQE…EEHR) and 288–298 (DNPREFFKQQE). Disordered stretches follow at residues 211 to 350 (MEQE…YITC) and 371 to 652 (SAAG…GGGL). Residues 328–340 (SGPPSSSSSSSSP) show a composition bias toward low complexity. Pro residues predominate over residues 507 to 517 (PDTPAGPPVPP). 2 stretches are compositionally biased toward acidic residues: residues 540–554 (QHEE…EEAT) and 640–652 (PLPE…GGGL).

In terms of tissue distribution, brain neurons.

The protein resides in the cytoplasm. It is found in the cell projection. It localises to the dendrite. Its subcellular location is the cell cortex. The protein localises to the cell junction. The protein resides in the growth cone. Actin cytoskeleton-organizing protein that plays a role in the formation of cell projections. Plays a role in dendritic spine morphogenesis and organization, including the localization of the dopamine receptor DRD1 to the dendritic spines. Involved in synaptic plasticity. This Gallus gallus (Chicken) protein is Drebrin (DBN1).